The primary structure comprises 783 residues: Ras and Rab interactor 1 (783 aa).

The residue at position 1 (Met1) is an N-acetylmethionine. Positions 1 to 53 are disordered; it reads MESPGESGAGSPGAPSPSSFTTGHLAREKPAQDPLYDVPNASGGQAGGPQRPG. 2 positions are modified to phosphoserine: Ser3 and Ser16. Tyr36 bears the Phosphotyrosine; by ABL1 and ABL2 mark. Positions 69–163 constitute an SH2 domain; that stretch reads WLQLQANAAA…ILLLPLQLPR (95 aa). A phosphoserine mark is found at Ser210, Ser258, Ser333, and Ser337. 2 disordered regions span residues 250–282 and 295–342; these read STET…ERLP and YRVP…HLGR. Pro residues predominate over residues 257-269; that stretch reads LSPPAVPPPPVPV. Residues 294-727 form a ras and 14-3-3 protein binding region region; that stretch reads GYRVPAGSGP…GSGQSEARSR (434 aa). Low complexity predominate over residues 317–334; that stretch reads GSPSSSEEEGVPGSRGSP. Ser351 carries the post-translational modification Phosphoserine; by PKD/PRKD1. Residues 456–598 enclose the VPS9 domain; it reads LAADGSLGRL…LSGLGQAHTL (143 aa). Phosphoserine occurs at positions 609 and 611. One can recognise a Ras-associating domain in the interval 624–706; the sequence is FQHLLRVAYQ…GYLVYRRAEW (83 aa). Arg692 is modified (omega-N-methylarginine). The interval 709 to 783 is disordered; sequence TQGAVTEEEG…EAEGSRAAEE (75 aa). A compositionally biased stretch (low complexity) spans 762–772; the sequence is QAQEGPAQPGE.

The protein belongs to the RIN (Ras interaction/interference) family. Interacts with the GTP-bound form of Ras proteins (NRAS, HRAS and KRAS). This interaction prevents the association between RAF1 and Ras. Interacts with 14-3-3 proteins YWHAB, YWHAE and YWHAZ when phosphorylated on Ser-351. Interacts with the SH3 domain of ABL1 and ABL2. Interacts with RAB5A. The interaction with Ras is probably regulated and antagonized by the interaction with 14-3-3 proteins. The interaction with 14-3-3 proteins is regulated by phosphorylation on Ser-351. In terms of processing, phosphorylated on tyrosine residues by ABL1 and ABL2. Phosphorylation at Ser-351 by PRKD1 induces interaction with 14-3-3 proteins. In terms of tissue distribution, expressed in all tissues examined with high levels in brain, placenta and pancreas.

It is found in the cytoplasm. It localises to the membrane. The protein resides in the cytoskeleton. In terms of biological role, ras effector protein, which may serve as an inhibitory modulator of neuronal plasticity in aversive memory formation. Can affect Ras signaling at different levels. First, by competing with RAF1 protein for binding to activated Ras. Second, by enhancing signaling from ABL1 and ABL2, which regulate cytoskeletal remodeling. Third, by activating RAB5A, possibly by functioning as a guanine nucleotide exchange factor (GEF) for RAB5A, by exchanging bound GDP for free GTP, and facilitating Ras-activated receptor endocytosis. The sequence is that of Ras and Rab interactor 1 (RIN1) from Homo sapiens (Human).